The following is an 850-amino-acid chain: RPA-related protein RADX (850 aa).

Residues 1 to 31 (MSGESGQPQPGPSHAGLYLEHPERDQAGVPG) form a disordered region. The segment at residues 228–331 (WNSRKNFPAL…LISTMEICLN (104 aa)) is a DNA-binding region (OB). Disordered stretches follow at residues 575-612 (EAFWNASRPSTSQAAGKEDHCHERGSKRSQDDRPMGSQ) and 632-671 (GPSANPVPVPQPHSSAQMKGSKHNTPSQESSTAYTTGKSR). A compositionally biased stretch (basic and acidic residues) spans 590–608 (GKEDHCHERGSKRSQDDRP). Residues 643 to 668 (PHSSAQMKGSKHNTPSQESSTAYTTG) are compositionally biased toward polar residues.

It localises to the chromosome. Functionally, single-stranded DNA-binding protein recruited to replication forks to maintain genome stability. Prevents fork collapse by antagonizing the accumulation of RAD51 at forks to ensure the proper balance of fork remodeling and protection without interfering with the capacity of cells to complete homologous recombination of double-strand breaks. This Mus musculus (Mouse) protein is RPA-related protein RADX.